The sequence spans 540 residues: Exopolysaccharide phosphotransferase SCO6022 (540 aa).

It belongs to the stealth family.

This Streptomyces coelicolor (strain ATCC BAA-471 / A3(2) / M145) protein is Exopolysaccharide phosphotransferase SCO6022.